The primary structure comprises 546 residues: CTP synthase (546 aa).

An amidoligase domain region spans residues 1 to 266 (MTTNYIFVTG…DDLVCTRFGI (266 aa)). Ser-14 provides a ligand contact to CTP. Ser-14 contributes to the UTP binding site. ATP-binding positions include 15 to 20 (SLGKGI) and Asp-72. Mg(2+)-binding residues include Asp-72 and Glu-140. CTP is bound by residues 147–149 (DIE), 187–192 (KTKPTQ), and Lys-223. UTP is bound by residues 187 to 192 (KTKPTQ) and Lys-223. Residue 239–241 (KDV) participates in ATP binding. In terms of domain architecture, Glutamine amidotransferase type-1 spans 291–542 (TIGMVGKYIE…VKAAGQYSRG (252 aa)). L-glutamine is bound at residue Gly-352. Cys-379 functions as the Nucleophile; for glutamine hydrolysis in the catalytic mechanism. L-glutamine is bound by residues 380–383 (LGMQ), Glu-403, and Arg-470. Active-site residues include His-515 and Glu-517.

The protein belongs to the CTP synthase family. As to quaternary structure, homotetramer.

The enzyme catalyses UTP + L-glutamine + ATP + H2O = CTP + L-glutamate + ADP + phosphate + 2 H(+). It catalyses the reaction L-glutamine + H2O = L-glutamate + NH4(+). The catalysed reaction is UTP + NH4(+) + ATP = CTP + ADP + phosphate + 2 H(+). The protein operates within pyrimidine metabolism; CTP biosynthesis via de novo pathway; CTP from UDP: step 2/2. Its activity is regulated as follows. Allosterically activated by GTP, when glutamine is the substrate; GTP has no effect on the reaction when ammonia is the substrate. The allosteric effector GTP functions by stabilizing the protein conformation that binds the tetrahedral intermediate(s) formed during glutamine hydrolysis. Inhibited by the product CTP, via allosteric rather than competitive inhibition. Functionally, catalyzes the ATP-dependent amination of UTP to CTP with either L-glutamine or ammonia as the source of nitrogen. Regulates intracellular CTP levels through interactions with the four ribonucleotide triphosphates. This is CTP synthase from Vibrio parahaemolyticus serotype O3:K6 (strain RIMD 2210633).